Here is a 417-residue protein sequence, read N- to C-terminus: Cysteate synthase (417 aa).

The residue at position 104 (lysine 104) is an N6-(pyridoxal phosphate)lysine. Residues asparagine 131 and threonine 371 each contribute to the pyridoxal 5'-phosphate site.

The protein belongs to the threonine synthase family. Cysteate synthase subfamily. Homotrimer. The cofactor is pyridoxal 5'-phosphate.

The enzyme catalyses O-phospho-L-serine + sulfite + H(+) = L-cysteate + phosphate. It participates in cofactor biosynthesis; coenzyme M biosynthesis. Specifically catalyzes the beta-elimination of phosphate from L-phosphoserine and the beta-addition of sulfite to the dehydroalanine intermediate to produce L-cysteate. The polypeptide is Cysteate synthase (Methanococcoides burtonii (strain DSM 6242 / NBRC 107633 / OCM 468 / ACE-M)).